Reading from the N-terminus, the 131-residue chain is Small ribosomal subunit protein uS8 (131 aa).

Belongs to the universal ribosomal protein uS8 family. As to quaternary structure, part of the 30S ribosomal subunit. Contacts proteins S5 and S12.

One of the primary rRNA binding proteins, it binds directly to 16S rRNA central domain where it helps coordinate assembly of the platform of the 30S subunit. The protein is Small ribosomal subunit protein uS8 of Methylococcus capsulatus (strain ATCC 33009 / NCIMB 11132 / Bath).